Consider the following 124-residue polypeptide: T cell receptor beta variable 13 (124 aa).

An N-terminal signal peptide occupies residues Met-1–Ala-31. The region spanning Gly-32–Leu-124 is the Ig-like domain. Cysteines 52 and 120 form a disulfide. Residue Asn-106 is glycosylated (N-linked (GlcNAc...) asparagine).

Alpha-beta TR is a heterodimer composed of an alpha and beta chain; disulfide-linked. The alpha-beta TR is associated with the transmembrane signaling CD3 coreceptor proteins to form the TR-CD3 (TcR or TCR). The assembly of alpha-beta TR heterodimers with CD3 occurs in the endoplasmic reticulum where a single alpha-beta TR heterodimer associates with one CD3D-CD3E heterodimer, one CD3G-CD3E heterodimer and one CD247 homodimer forming a stable octameric structure. CD3D-CD3E and CD3G-CD3E heterodimers preferentially associate with TR alpha and TR beta chains, respectively. The association of the CD247 homodimer is the last step of TcR assembly in the endoplasmic reticulum and is required for transport to the cell surface.

It is found in the cell membrane. Functionally, v region of the variable domain of T cell receptor (TR) beta chain that participates in the antigen recognition. Alpha-beta T cell receptors are antigen specific receptors which are essential to the immune response and are present on the cell surface of T lymphocytes. Recognize peptide-major histocompatibility (MH) (pMH) complexes that are displayed by antigen presenting cells (APC), a prerequisite for efficient T cell adaptive immunity against pathogens. Binding of alpha-beta TR to pMH complex initiates TR-CD3 clustering on the cell surface and intracellular activation of LCK that phosphorylates the ITAM motifs of CD3G, CD3D, CD3E and CD247 enabling the recruitment of ZAP70. In turn ZAP70 phosphorylates LAT, which recruits numerous signaling molecules to form the LAT signalosome. The LAT signalosome propagates signal branching to three major signaling pathways, the calcium, the mitogen-activated protein kinase (MAPK) kinase and the nuclear factor NF-kappa-B (NF-kB) pathways, leading to the mobilization of transcription factors that are critical for gene expression and essential for T cell growth and differentiation. The T cell repertoire is generated in the thymus, by V-(D)-J rearrangement. This repertoire is then shaped by intrathymic selection events to generate a peripheral T cell pool of self-MH restricted, non-autoaggressive T cells. Post-thymic interaction of alpha-beta TR with the pMH complexes shapes TR structural and functional avidity. The sequence is that of T cell receptor beta variable 13 from Homo sapiens (Human).